A 107-amino-acid polypeptide reads, in one-letter code: UPF0145 protein LVIS_1527 (107 aa).

Belongs to the UPF0145 family.

This chain is UPF0145 protein LVIS_1527, found in Levilactobacillus brevis (strain ATCC 367 / BCRC 12310 / CIP 105137 / JCM 1170 / LMG 11437 / NCIMB 947 / NCTC 947) (Lactobacillus brevis).